Here is a 624-residue protein sequence, read N- to C-terminus: MCGIVGYVGQQPACAVVMAALRRMEYRGYDSSGVALVNGDGTLTVSRRAGRLANLEEAVAQLPPSALTGTTGLGHTRWATHGRPTDRNAHPHRDAAGKIAVVHNGIIENYAGLRHELEADGVEFASDTDTEVAVHLVAQAYRHGPTAGDFAASVLAVLRRLDGHFTLVFANADEPGTIVAARRSTPLVIGIGDGEMFVGSDVAAFIPHTRNAIELGQDQAVVLTADGYRITDFDGNDDLGPGAYREFHIDWDLAAAEKGGYEYFMLKEIAEQPAAVADTLLGHFVDGRIVLDEQRLSDQELREVDKVFVVACGTAYHSGLLAKYAIEHWTRLPVEVELASEFRYRDPVLDRSTLVVAISQSGETADTLEAVRHAKEQKAKVLAICNTNGSQIPRECDAVLYTRAGPEIGVASTKTFLAQITANYLVGLALAQARGTKYPDEVEREYHELEAMPDLVARVLATIKPVAALAQRFAQSPTVLFLGRHVGYPVALEGALKLKELAYMHAEGFAAGELKHGPIALIEDDLPVIVIMPSPKGSAVLHAKLLSNIREIQARGAITIVIAEEGDDTVRPYADHLIEIPSVSTLLQPLLSTIPLQVFAASVAQARGYDVDKPRNLAKSVTVE.

Cysteine 2 functions as the Nucleophile; for GATase activity in the catalytic mechanism. A Glutamine amidotransferase type-2 domain is found at 2–226; sequence CGIVGYVGQQ…QDQAVVLTAD (225 aa). 2 SIS domains span residues 297 to 436 and 469 to 614; these read SDQE…ARGT and LAQR…VDKP. Residue lysine 619 is the For Fru-6P isomerization activity of the active site.

As to quaternary structure, homodimer.

Its subcellular location is the cytoplasm. The enzyme catalyses D-fructose 6-phosphate + L-glutamine = D-glucosamine 6-phosphate + L-glutamate. Its function is as follows. Catalyzes the first step in hexosamine metabolism, converting fructose-6P into glucosamine-6P using glutamine as a nitrogen source. This Mycolicibacterium paratuberculosis (strain ATCC BAA-968 / K-10) (Mycobacterium paratuberculosis) protein is Glutamine--fructose-6-phosphate aminotransferase [isomerizing].